The chain runs to 170 residues: Adenine phosphoribosyltransferase (170 aa).

It belongs to the purine/pyrimidine phosphoribosyltransferase family. In terms of assembly, homodimer.

Its subcellular location is the cytoplasm. It catalyses the reaction AMP + diphosphate = 5-phospho-alpha-D-ribose 1-diphosphate + adenine. It participates in purine metabolism; AMP biosynthesis via salvage pathway; AMP from adenine: step 1/1. Functionally, catalyzes a salvage reaction resulting in the formation of AMP, that is energically less costly than de novo synthesis. The sequence is that of Adenine phosphoribosyltransferase from Streptococcus pneumoniae (strain Taiwan19F-14).